The sequence spans 450 residues: GTPase Der (450 aa).

2 EngA-type G domains span residues 3–170 (PTIA…LATG) and 183–356 (LKIA…AECS). Residues 9–16 (GRPNVGKS), 56–60 (DTGGL), 122–125 (NKVD), 189–196 (GRPNAGKS), 236–240 (DTAGV), and 301–304 (NKID) each bind GTP. Residues 357–441 (LRISTGQLNR…PLNIVFRSTF (85 aa)) form the KH-like domain.

The protein belongs to the TRAFAC class TrmE-Era-EngA-EngB-Septin-like GTPase superfamily. EngA (Der) GTPase family. Associates with the 50S ribosomal subunit.

Its function is as follows. GTPase that plays an essential role in the late steps of ribosome biogenesis. The chain is GTPase Der from Maridesulfovibrio salexigens (strain ATCC 14822 / DSM 2638 / NCIMB 8403 / VKM B-1763) (Desulfovibrio salexigens).